The primary structure comprises 202 residues: LexA repressor 1 (202 aa).

Residues 28 to 48 (RAEIAQELGFKSPNAAEEHLK) constitute a DNA-binding region (H-T-H motif). Catalysis depends on for autocatalytic cleavage activity residues serine 123 and lysine 160.

Belongs to the peptidase S24 family. Homodimer.

The enzyme catalyses Hydrolysis of Ala-|-Gly bond in repressor LexA.. Functionally, represses a number of genes involved in the response to DNA damage (SOS response), including recA and lexA. In the presence of single-stranded DNA, RecA interacts with LexA causing an autocatalytic cleavage which disrupts the DNA-binding part of LexA, leading to derepression of the SOS regulon and eventually DNA repair. The protein is LexA repressor 1 of Pseudomonas syringae pv. tomato (strain ATCC BAA-871 / DC3000).